The chain runs to 369 residues: Flagellar P-ring protein 2 (369 aa).

A signal peptide spans 1-24; that stretch reads MCAFAAILSLLSVLLMATSRSSDA.

The protein belongs to the FlgI family. In terms of assembly, the basal body constitutes a major portion of the flagellar organelle and consists of four rings (L,P,S, and M) mounted on a central rod.

It is found in the periplasm. It localises to the bacterial flagellum basal body. Functionally, assembles around the rod to form the L-ring and probably protects the motor/basal body from shearing forces during rotation. In Burkholderia thailandensis (strain ATCC 700388 / DSM 13276 / CCUG 48851 / CIP 106301 / E264), this protein is Flagellar P-ring protein 2.